A 305-amino-acid chain; its full sequence is MEFISQFLEMLLAERALSKNSILSYKRDLLDFHNYLAKQKLSELNITTDNIRNWVEYLAENSLQARSINRKISTIKSYYEFLISENHTNLNPLLNIDLPKYQNKLPEILSIDDIKSLLEYCSQDISPEGARLNAMIHLLYASGLRVSELVSLKLSDILSNKVSREVKKIFSVLGKGNKERIIVINEPAINSLVKYLVVRDNFVNKTKPKNLIYLFPSSAAAGYMTRQNFAILLKSAALYAGLNPEHISPHVLRHSFASHLLEGGADLRVIQELLGHADISTTQIYTHLQTNHLKKALLHHPLSKN.

One can recognise a Core-binding (CB) domain in the interval 1–83; the sequence is MEFISQFLEM…TIKSYYEFLI (83 aa). The Tyr recombinase domain occupies 104 to 298; it reads KLPEILSIDD…QTNHLKKALL (195 aa). Catalysis depends on residues arginine 145, lysine 175, histidine 250, arginine 253, and histidine 276. Tyrosine 285 serves as the catalytic O-(3'-phospho-DNA)-tyrosine intermediate.

This sequence belongs to the 'phage' integrase family. XerD subfamily. Forms a cyclic heterotetrameric complex composed of two molecules of XerC and two molecules of XerD.

The protein resides in the cytoplasm. Its function is as follows. Site-specific tyrosine recombinase, which acts by catalyzing the cutting and rejoining of the recombining DNA molecules. The XerC-XerD complex is essential to convert dimers of the bacterial chromosome into monomers to permit their segregation at cell division. It also contributes to the segregational stability of plasmids. This chain is Tyrosine recombinase XerD, found in Rickettsia bellii (strain RML369-C).